Here is a 282-residue protein sequence, read N- to C-terminus: tRNA uridine(34) hydroxylase (282 aa).

The Rhodanese domain maps to 128–222 (DGREVVMLDT…YFEEVGADHY (95 aa)). Cysteine 182 serves as the catalytic Cysteine persulfide intermediate.

This sequence belongs to the TrhO family.

It catalyses the reaction uridine(34) in tRNA + AH2 + O2 = 5-hydroxyuridine(34) in tRNA + A + H2O. In terms of biological role, catalyzes oxygen-dependent 5-hydroxyuridine (ho5U) modification at position 34 in tRNAs. The chain is tRNA uridine(34) hydroxylase from Ralstonia nicotianae (strain ATCC BAA-1114 / GMI1000) (Ralstonia solanacearum).